Here is a 336-residue protein sequence, read N- to C-terminus: Mitochondrial import receptor subunit TOM40 homolog (336 aa).

The interval 1–58 (MGNVLAASSPAPPPAGSPPVPGLVSVPPGFTMPPVAGLTPTPDKKEPQEERLPNPGTF) is disordered. Residues 10-21 (PAPPPAGSPPVP) are compositionally biased toward pro residues. Over residues 42–52 (PDKKEPQEERL) the composition is skewed to basic and acidic residues.

It belongs to the Tom40 family. In terms of assembly, forms part of the preprotein translocase complex of the outer mitochondrial membrane (TOM complex). Interacts with mitochondrial targeting sequences.

It is found in the mitochondrion outer membrane. Channel-forming protein essential for import of protein precursors into mitochondria. This chain is Mitochondrial import receptor subunit TOM40 homolog (tomm40), found in Xenopus laevis (African clawed frog).